We begin with the raw amino-acid sequence, 367 residues long: MTKRNIVDLPEDLVMEILARVPTVTLVRLQSTSKRWNVLIEDKRFAEQHFTNAPRHSLLIMLMTFRVYLVSVDLHTIHNNKVNIISQLRLKDPLSNFLEEVDICNVFHCDGFLLCTTVDNRLVVSNPCSRDTKWIQPRNFYKKFDIFALGKSSCNKYKIMRMDQFYPDRPEFMNYEIYDFNSNSWRVVGKITDWFIPRCMDRGMSVNGNTYWLASTNKDLTSSSFLLGFDFSTERFVRVSLPGDHLSDPVFALAVTREDPKICVAIIQELHIDVWIATTIESTGAASWSKFLSVELANLYERICLDSWMNFLVDQKNKVLVYRDGNYWISNVFLHVVGEDKCIQVDHHDSVSRCSLVVNYVPTLVHI.

One can recognise an F-box domain in the interval 3 to 53 (KRNIVDLPEDLVMEILARVPTVTLVRLQSTSKRWNVLIEDKRFAEQHFTNA).

The sequence is that of Putative F-box protein At4g10190 from Arabidopsis thaliana (Mouse-ear cress).